The primary structure comprises 782 residues: E3 UFM1-protein ligase 1 homolog (782 aa).

The segment at 404–478 is disordered; sequence NVSTQELEDE…SRGGGGASKK (75 aa).

This sequence belongs to the UFL1 family.

In terms of biological role, E3 UFM1-protein ligase that mediates ufmylation of target proteins. This is E3 UFM1-protein ligase 1 homolog from Drosophila melanogaster (Fruit fly).